A 386-amino-acid polypeptide reads, in one-letter code: MQMADLEKKLENSVLPPLLKRELSEKILKEEISEEYLVDEIISETIRAYERTLVEPGEAVGVVAAQSIGEPGTQMTMRTFHYAGVAELNVTLGLPRMIEIVDARKEPSTPTMTIYLNDDFKGDREKASMVAKNIESTNVESVSEDISVDLINECITIVLNTHQLESRGLTVADVIESIKSKMKLKIEDHENVLNLKIKTPSLKALRKRLPKVRAIHLKGVQNIKRVIIRKEVDEYILYSEGSNIKEVFDIEGVDTTKTTTNNIVEIQDVLGIEAARNAIIYEMDATLGNQGLTVDKRHLMMVADLMCTDGVVKPIGRHGIGGEKASVLARAAFEETVKHLYSASMRGYVDELGGVVENIIVGKPIAMGTGCIDVCIDKTYEEGKEL.

This sequence belongs to the RNA polymerase beta' chain family. As to quaternary structure, part of the RNA polymerase complex.

Its subcellular location is the cytoplasm. The enzyme catalyses RNA(n) + a ribonucleoside 5'-triphosphate = RNA(n+1) + diphosphate. DNA-dependent RNA polymerase (RNAP) catalyzes the transcription of DNA into RNA using the four ribonucleoside triphosphates as substrates. Forms part of the jaw domain. The polypeptide is DNA-directed RNA polymerase subunit Rpo1C (Methanococcus maripaludis (strain C6 / ATCC BAA-1332)).